A 207-amino-acid polypeptide reads, in one-letter code: Pyridoxine/pyridoxamine 5'-phosphate oxidase (207 aa).

FMN is bound by residues 53–58, 68–69, Lys-75, and Gln-97; these read RMVLLK and YT. Lys-58 serves as a coordination point for substrate. Tyr-115, Arg-119, and Ser-123 together coordinate substrate. Residues 132–133 and Trp-177 contribute to the FMN site; that span reads QS. 183-185 contributes to the substrate binding site; that stretch reads RLH. Arg-187 lines the FMN pocket.

It belongs to the pyridoxamine 5'-phosphate oxidase family. Homodimer. It depends on FMN as a cofactor.

It carries out the reaction pyridoxamine 5'-phosphate + O2 + H2O = pyridoxal 5'-phosphate + H2O2 + NH4(+). The catalysed reaction is pyridoxine 5'-phosphate + O2 = pyridoxal 5'-phosphate + H2O2. Its pathway is cofactor metabolism; pyridoxal 5'-phosphate salvage; pyridoxal 5'-phosphate from pyridoxamine 5'-phosphate: step 1/1. It participates in cofactor metabolism; pyridoxal 5'-phosphate salvage; pyridoxal 5'-phosphate from pyridoxine 5'-phosphate: step 1/1. In terms of biological role, catalyzes the oxidation of either pyridoxine 5'-phosphate (PNP) or pyridoxamine 5'-phosphate (PMP) into pyridoxal 5'-phosphate (PLP). The chain is Pyridoxine/pyridoxamine 5'-phosphate oxidase from Bartonella quintana (strain Toulouse) (Rochalimaea quintana).